Reading from the N-terminus, the 176-residue chain is Large ribosomal subunit protein uL10 (176 aa).

The protein belongs to the universal ribosomal protein uL10 family. As to quaternary structure, part of the ribosomal stalk of the 50S ribosomal subunit. The N-terminus interacts with L11 and the large rRNA to form the base of the stalk. The C-terminus forms an elongated spine to which L12 dimers bind in a sequential fashion forming a multimeric L10(L12)X complex.

Forms part of the ribosomal stalk, playing a central role in the interaction of the ribosome with GTP-bound translation factors. The protein is Large ribosomal subunit protein uL10 of Acaryochloris marina (strain MBIC 11017).